Here is a 423-residue protein sequence, read N- to C-terminus: Serine--tRNA ligase (423 aa).

L-serine is bound at residue 231-233; it reads TAE. 262–264 contributes to the ATP binding site; it reads RSE. An L-serine-binding site is contributed by Glu285. An ATP-binding site is contributed by 349 to 352; that stretch reads EISS. Ser384 lines the L-serine pocket.

It belongs to the class-II aminoacyl-tRNA synthetase family. Type-1 seryl-tRNA synthetase subfamily. Homodimer. The tRNA molecule binds across the dimer.

The protein resides in the cytoplasm. It carries out the reaction tRNA(Ser) + L-serine + ATP = L-seryl-tRNA(Ser) + AMP + diphosphate + H(+). It catalyses the reaction tRNA(Sec) + L-serine + ATP = L-seryl-tRNA(Sec) + AMP + diphosphate + H(+). It participates in aminoacyl-tRNA biosynthesis; selenocysteinyl-tRNA(Sec) biosynthesis; L-seryl-tRNA(Sec) from L-serine and tRNA(Sec): step 1/1. In terms of biological role, catalyzes the attachment of serine to tRNA(Ser). Is also able to aminoacylate tRNA(Sec) with serine, to form the misacylated tRNA L-seryl-tRNA(Sec), which will be further converted into selenocysteinyl-tRNA(Sec). This Lactococcus lactis subsp. cremoris (strain SK11) protein is Serine--tRNA ligase.